Reading from the N-terminus, the 211-residue chain is Pyruvate dehydrogenase E1 component subunit beta, mitochondrial (211 aa).

Tyr-31 is subject to Phosphotyrosine. The K(+) site is built by Ile-48, Ala-96, Ile-97, Asp-99, and Asn-101.

As to quaternary structure, heterotetramer of two PDHA1 and two PDHB subunits. The heterotetramer interacts with DLAT, and is part of the multimeric pyruvate dehydrogenase complex that contains multiple copies of pyruvate dehydrogenase (E1), dihydrolipoamide acetyltransferase (DLAT, E2) and lipoamide dehydrogenase (DLD, E3). These subunits are bound to an inner core composed of about 48 DLAT and 12 PDHX molecules. Interacts with DLAT. It depends on thiamine diphosphate as a cofactor.

The protein resides in the mitochondrion matrix. It catalyses the reaction N(6)-[(R)-lipoyl]-L-lysyl-[protein] + pyruvate + H(+) = N(6)-[(R)-S(8)-acetyldihydrolipoyl]-L-lysyl-[protein] + CO2. In terms of biological role, the pyruvate dehydrogenase complex catalyzes the overall conversion of pyruvate to acetyl-CoA and CO(2), and thereby links the glycolytic pathway to the tricarboxylic cycle. The chain is Pyruvate dehydrogenase E1 component subunit beta, mitochondrial from Mesocricetus auratus (Golden hamster).